We begin with the raw amino-acid sequence, 104 residues long: Seminal ribonuclease (104 aa).

Intrachain disulfides connect Cys12-Cys70, Cys26-Cys81, Cys44-Cys96, and Cys51-Cys58. Substrate is bound by residues Lys27–Thr31, Lys52, and Arg71.

The protein belongs to the pancreatic ribonuclease family. In terms of assembly, homodimer; disulfide-linked.

Its subcellular location is the secreted. The catalysed reaction is an [RNA] containing cytidine + H2O = an [RNA]-3'-cytidine-3'-phosphate + a 5'-hydroxy-ribonucleotide-3'-[RNA].. The enzyme catalyses an [RNA] containing uridine + H2O = an [RNA]-3'-uridine-3'-phosphate + a 5'-hydroxy-ribonucleotide-3'-[RNA].. The chain is Seminal ribonuclease (SRN) from Saiga tatarica (Saiga antelope).